The chain runs to 925 residues: Proto-oncogene DBL (925 aa).

The CRAL-TRIO domain occupies 1 to 88 (MAEANPRRGK…ELGGTLQYCH (88 aa)). Residues 221–322 (WKFEQDFQQL…EIKAKRIQLS (102 aa)) form a Spectrin repeat. The DH domain maps to 495 to 675 (LKNHVLNELI…LDLLKSVNDS (181 aa)). Residues 687-809 (NLNELGKMIM…WLKEIRNILL (123 aa)) enclose the PH domain.

This sequence belongs to the MCF2 family. As to quaternary structure, interacts with an array of inositol phospholipids such as phosphatidylinositol 3-phosphate (PI3P), phosphatidylinositol 4-phosphate (PI4P) and phosphatidylinositol 5-phosphate (PI5P). May interact with CCPG1. Post-translationally, phosphorylation by TNK2 enhances guanine nucleotide exchange factor (GEF) activity toward Rho family proteins. Isoform 1 is expressed only in brain. Isoform 3 is expressed in heart, kidney, spleen, liver and testis. Isoform 4 is expressed in brain, heart, kidney, testis, placenta, stomach and peripheral blood. The protein is detectable in brain, heart, kidney, intestine, muscle, lung and testis.

The protein resides in the cytoplasm. It is found in the membrane. Guanine nucleotide exchange factor (GEF) that modulates the Rho family of GTPases. Promotes the conversion of some member of the Rho family GTPase from the GDP-bound to the GTP-bound form. Isoform 1 exhibits no activity toward RHOA, RAC1 or CDC42. Isoform 2 exhibits decreased GEF activity toward CDC42. Isoform 3 exhibits a weak but significant activity toward RAC1 and CDC42. Isoform 4 exhibits significant activity toward RHOA and CDC42. The truncated DBL oncogene is active toward RHOA, RAC1 and CDC42. This is Proto-oncogene DBL (MCF2) from Homo sapiens (Human).